The sequence spans 172 residues: S-ribosylhomocysteine lyase (172 aa).

The Fe cation site is built by His54, His58, and Cys128.

This sequence belongs to the LuxS family. As to quaternary structure, homodimer. It depends on Fe cation as a cofactor.

The catalysed reaction is S-(5-deoxy-D-ribos-5-yl)-L-homocysteine = (S)-4,5-dihydroxypentane-2,3-dione + L-homocysteine. Its function is as follows. Involved in the synthesis of autoinducer 2 (AI-2) which is secreted by bacteria and is used to communicate both the cell density and the metabolic potential of the environment. The regulation of gene expression in response to changes in cell density is called quorum sensing. Catalyzes the transformation of S-ribosylhomocysteine (RHC) to homocysteine (HC) and 4,5-dihydroxy-2,3-pentadione (DPD). In Vibrio cholerae serotype O1 (strain ATCC 39541 / Classical Ogawa 395 / O395), this protein is S-ribosylhomocysteine lyase.